A 79-amino-acid polypeptide reads, in one-letter code: RNA-binding protein Hfq (79 aa).

One can recognise a Sm domain in the interval 10-70 (DAFLNHVRKT…ISTIMPAQPI (61 aa)).

It belongs to the Hfq family. As to quaternary structure, homohexamer.

Functionally, RNA chaperone that binds small regulatory RNA (sRNAs) and mRNAs to facilitate mRNA translational regulation in response to envelope stress, environmental stress and changes in metabolite concentrations. Also binds with high specificity to tRNAs. The sequence is that of RNA-binding protein Hfq from Ruegeria pomeroyi (strain ATCC 700808 / DSM 15171 / DSS-3) (Silicibacter pomeroyi).